Here is a 182-residue protein sequence, read N- to C-terminus: Adenine phosphoribosyltransferase 4 (182 aa).

It belongs to the purine/pyrimidine phosphoribosyltransferase family. As to quaternary structure, homodimer.

It is found in the cytoplasm. It catalyses the reaction AMP + diphosphate = 5-phospho-alpha-D-ribose 1-diphosphate + adenine. It participates in purine metabolism; AMP biosynthesis via salvage pathway; AMP from adenine: step 1/1. Functionally, catalyzes a salvage reaction resulting in the formation of AMP, that is energically less costly than de novo synthesis. May contribute to the recycling of adenine into adenylate nucleotides and the inactivation of cytokinins by phosphoribosylation. Possesses low activity toward adenine, but can efficiently convert cytokinins from free bases (active form) to the corresponding nucleotides (inactive form). The protein is Adenine phosphoribosyltransferase 4 (APT4) of Arabidopsis thaliana (Mouse-ear cress).